A 381-amino-acid chain; its full sequence is MPEEVHLGEKEVETFAFQAEIAQLMSLIINTFYSNKEIFLWELISNASDALDKIRYESLTDPSKLDSGKELKIDIIPNTQEHTLTLVDTGIGMTKADLINNLGTIAKFQDQTEYLEEMQVKEVVEKHSQFLGYPITLYLEKEREKEISDGKAEEEKGEKEEENKDDEEKPKIEDVGSDEEDDSGKDKKKKTKKIKEKYIDQEELNKTKPIWTRNTEDITQEEYGEFYKSLTNDWKDHLAVRYFSVEEYVSRMKEIQKSIYYITGESKEQVANSAFVEQVWKRDSRVVYMTEPIDGYQLKEFDGKSLVSVTKEGLELPEDGEEKKRMEERKAKFENLCKFMKETLDKKVEMVTVSNRLVSSSCCIVTSTYSWTANMEQIMKA.

Asn-46, Asp-88, and Lys-107 together coordinate ATP. The segment covering Lys-145–Asp-174 has biased composition (basic and acidic residues). A disordered region spans residues Lys-145–Lys-192. Ser-177 bears the Phosphoserine mark. The stretch at Glu-315–Lys-347 forms a coiled coil.

It belongs to the heat shock protein 90 family. As to quaternary structure, homodimer.

It localises to the cytoplasm. Putative molecular chaperone that may promote the maturation, structural maintenance and proper regulation of specific target proteins. This is Putative heat shock protein HSP 90-beta 2 (HSP90AB2P) from Homo sapiens (Human).